Consider the following 101-residue polypeptide: uncharacterized protein (101 aa).

Positions 1–18 are cleaved as a signal peptide; it reads MSINALLYVLSLALLIWT. A helical membrane pass occupies residues 62 to 82; that stretch reads FQFDSIPSSSLSLSPFPFLFF.

It is found in the membrane. This is an uncharacterized protein from Saccharomyces cerevisiae (strain ATCC 204508 / S288c) (Baker's yeast).